We begin with the raw amino-acid sequence, 128 residues long: Large ribosomal subunit protein bL17 (128 aa).

The protein belongs to the bacterial ribosomal protein bL17 family. As to quaternary structure, part of the 50S ribosomal subunit. Contacts protein L32.

The polypeptide is Large ribosomal subunit protein bL17 (Pseudomonas entomophila (strain L48)).